The sequence spans 280 residues: Nucleotide-binding protein Dgeo_0723 (280 aa).

Residue 8-15 (GLSGSGKS) coordinates ATP. 57–60 (DART) serves as a coordination point for GTP.

It belongs to the RapZ-like family.

In terms of biological role, displays ATPase and GTPase activities. This is Nucleotide-binding protein Dgeo_0723 from Deinococcus geothermalis (strain DSM 11300 / CIP 105573 / AG-3a).